The chain runs to 159 residues: 2-C-methyl-D-erythritol 2,4-cyclodiphosphate synthase (159 aa).

Asp-10 and His-12 together coordinate a divalent metal cation. Residues 10 to 12 and 37 to 38 each bind 4-CDP-2-C-methyl-D-erythritol 2-phosphate; these read DVH and HS. Residue His-45 coordinates a divalent metal cation. 4-CDP-2-C-methyl-D-erythritol 2-phosphate-binding positions include 59–61, 64–68, 103–109, 135–138, Phe-142, and Arg-145; these read DIG, FPDTD, AQAPKML, and TTTE.

It belongs to the IspF family. Homotrimer. Requires a divalent metal cation as cofactor.

The enzyme catalyses 4-CDP-2-C-methyl-D-erythritol 2-phosphate = 2-C-methyl-D-erythritol 2,4-cyclic diphosphate + CMP. The protein operates within isoprenoid biosynthesis; isopentenyl diphosphate biosynthesis via DXP pathway; isopentenyl diphosphate from 1-deoxy-D-xylulose 5-phosphate: step 4/6. In terms of biological role, involved in the biosynthesis of isopentenyl diphosphate (IPP) and dimethylallyl diphosphate (DMAPP), two major building blocks of isoprenoid compounds. Catalyzes the conversion of 4-diphosphocytidyl-2-C-methyl-D-erythritol 2-phosphate (CDP-ME2P) to 2-C-methyl-D-erythritol 2,4-cyclodiphosphate (ME-CPP) with a corresponding release of cytidine 5-monophosphate (CMP). The chain is 2-C-methyl-D-erythritol 2,4-cyclodiphosphate synthase from Francisella philomiragia subsp. philomiragia (strain ATCC 25017 / CCUG 19701 / FSC 153 / O#319-036).